A 290-amino-acid chain; its full sequence is Pyridoxal kinase PdxY (290 aa).

Residues Ser12 and 47–48 (TQ) contribute to the substrate site. ATP is bound by residues Asp114, Glu151, Lys184, and 211 to 214 (RPLL). Position 225 (Asp225) interacts with substrate.

Belongs to the pyridoxine kinase family. PdxY subfamily. As to quaternary structure, homodimer. Mg(2+) serves as cofactor.

The catalysed reaction is pyridoxal + ATP = pyridoxal 5'-phosphate + ADP + H(+). It functions in the pathway cofactor metabolism; pyridoxal 5'-phosphate salvage; pyridoxal 5'-phosphate from pyridoxal: step 1/1. Functionally, pyridoxal kinase involved in the salvage pathway of pyridoxal 5'-phosphate (PLP). Catalyzes the phosphorylation of pyridoxal to PLP. The chain is Pyridoxal kinase PdxY from Pseudomonas putida (strain GB-1).